The sequence spans 270 residues: Putative phosphoenolpyruvate synthase regulatory protein (270 aa).

Residue 150–157 (GVSRCGKT) participates in ADP binding.

It belongs to the pyruvate, phosphate/water dikinase regulatory protein family. PSRP subfamily.

The catalysed reaction is [pyruvate, water dikinase] + ADP = [pyruvate, water dikinase]-phosphate + AMP + H(+). It catalyses the reaction [pyruvate, water dikinase]-phosphate + phosphate + H(+) = [pyruvate, water dikinase] + diphosphate. Bifunctional serine/threonine kinase and phosphorylase involved in the regulation of the phosphoenolpyruvate synthase (PEPS) by catalyzing its phosphorylation/dephosphorylation. In Aeromonas hydrophila subsp. hydrophila (strain ATCC 7966 / DSM 30187 / BCRC 13018 / CCUG 14551 / JCM 1027 / KCTC 2358 / NCIMB 9240 / NCTC 8049), this protein is Putative phosphoenolpyruvate synthase regulatory protein.